The chain runs to 420 residues: Phosphoglycerate kinase, cytosolic (420 aa).

Residues valine 23, aspartate 24, phenylalanine 25, asparagine 26, arginine 39, serine 61, histidine 62, glycine 64, arginine 65, arginine 135, histidine 171, and arginine 172 each contribute to the (2R)-3-phosphoglycerate site. 2 residues coordinate ADP: glycine 217 and alanine 218. Residue glycine 217 participates in CDP binding. The AMP site is built by alanine 218 and lysine 219. Alanine 218 serves as a coordination point for ATP. Alanine 218 contributes to the Mg(2+) binding site. Lysine 219 contributes to the (2R)-3-phosphoglycerate binding site. Aspartate 222 lines the CDP pocket. Aspartate 222 lines the Mg(2+) pocket. ADP-binding residues include lysine 223 and glycine 241. Residue lysine 223 participates in AMP binding. Lysine 223 lines the ATP pocket. Position 241 (glycine 241) interacts with CDP. Positions 242 and 314 each coordinate AMP. Residues alanine 242 and alanine 314 each coordinate ATP. Alanine 314 and asparagine 338 together coordinate ADP. Residues glycine 339 and phenylalanine 344 each contribute to the CDP site. ADP is bound by residues phenylalanine 344, glutamate 345, glutamate 377, and serine 378. Residue glutamate 345 coordinates AMP. Residues glutamate 345, glutamate 377, and serine 378 each contribute to the ATP site. Residue glutamate 377 participates in Mg(2+) binding.

It belongs to the phosphoglycerate kinase family. In terms of assembly, monomer. Requires Mg(2+) as cofactor.

The protein resides in the cytoplasm. The enzyme catalyses (2R)-3-phosphoglycerate + ATP = (2R)-3-phospho-glyceroyl phosphate + ADP. It functions in the pathway carbohydrate degradation; glycolysis; pyruvate from D-glyceraldehyde 3-phosphate: step 2/5. The chain is Phosphoglycerate kinase, cytosolic from Trypanosoma brucei brucei.